The following is a 155-amino-acid chain: Ribonuclease H (155 aa).

In terms of domain architecture, RNase H type-1 spans 1–142 (MLKQVEIFTD…CDELARAAAS (142 aa)). Mg(2+)-binding residues include aspartate 10, glutamate 48, aspartate 70, and aspartate 134.

This sequence belongs to the RNase H family. As to quaternary structure, monomer. The cofactor is Mg(2+).

The protein resides in the cytoplasm. It carries out the reaction Endonucleolytic cleavage to 5'-phosphomonoester.. Endonuclease that specifically degrades the RNA of RNA-DNA hybrids. This chain is Ribonuclease H, found in Klebsiella pneumoniae subsp. pneumoniae (strain ATCC 700721 / MGH 78578).